Here is a 602-residue protein sequence, read N- to C-terminus: Beta-(1--&gt;2)glucan export ATP-binding/permease protein NdvA (602 aa).

Residues 21–311 enclose the ABC transmembrane type-1 domain; that stretch reads GWVLAGANLL…VVGFVNSVFM (291 aa). 6 helical membrane-spanning segments follow: residues 22–42, 68–88, 146–166, 167–187, 238–258, and 285–305; these read WVLAGANLLLAAAQFAEPVLF, LLLAWAVFGLFTIGCGAAVAL, EHFAALMSLVVLLPLSIYINW, RLALLLFALCVVFTVLTTLVV, LLAMQMPVLSWWALVTVITRA, and IVMFVSFATMLIQKLEQVVGF. One can recognise an ABC transporter domain in the interval 345–579; sequence VEFDNVSFSY…RGYFAELAHA (235 aa). 378–385 lines the ATP pocket; the sequence is GATGAGKS.

Belongs to the ABC transporter superfamily. Beta-(1--&gt;2)glucan exporter (TC 3.A.1.108.1) family. In terms of assembly, homodimer.

It is found in the cell inner membrane. It carries out the reaction [(1-&gt;2)-beta-D-glucosyl](n)(in) + ATP + H2O = [(1-&gt;2)-beta-D-glucosyl](n)(out) + ADP + phosphate + H(+). Its function is as follows. Involved in Beta-(1--&gt;2)glucan export. Transmembrane domains (TMD) form a pore in the inner membrane and the ATP-binding domain (NBD) is responsible for energy generation. This is Beta-(1--&gt;2)glucan export ATP-binding/permease protein NdvA from Rhodopseudomonas palustris (strain BisA53).